We begin with the raw amino-acid sequence, 298 residues long: Nucleotide-binding protein RSKD131_3085 (298 aa).

11 to 18 (GPSGAGRT) is an ATP binding site. 58-61 (DVRN) is a binding site for GTP.

This sequence belongs to the RapZ-like family.

Displays ATPase and GTPase activities. This is Nucleotide-binding protein RSKD131_3085 from Cereibacter sphaeroides (strain KD131 / KCTC 12085) (Rhodobacter sphaeroides).